A 291-amino-acid chain; its full sequence is UDP-N-acetylenolpyruvoylglucosamine reductase (291 aa).

An FAD-binding PCMH-type domain is found at 19–186 (GIGGPAEWIA…VSARLKLASG (168 aa)). R165 is a catalytic residue. Residue S215 is the Proton donor of the active site. E285 is an active-site residue.

The protein belongs to the MurB family. FAD is required as a cofactor.

It is found in the cytoplasm. It catalyses the reaction UDP-N-acetyl-alpha-D-muramate + NADP(+) = UDP-N-acetyl-3-O-(1-carboxyvinyl)-alpha-D-glucosamine + NADPH + H(+). Its pathway is cell wall biogenesis; peptidoglycan biosynthesis. Its function is as follows. Cell wall formation. The sequence is that of UDP-N-acetylenolpyruvoylglucosamine reductase from Prochlorococcus marinus (strain NATL2A).